The sequence spans 428 residues: NADP-specific glutamate dehydrogenase (428 aa).

Lysine 68 and lysine 92 together coordinate substrate. The active-site Proton donor is the lysine 104. Threonine 188 and asparagine 219 together coordinate NADP(+). Serine 356 serves as a coordination point for substrate.

This sequence belongs to the Glu/Leu/Phe/Val dehydrogenases family. As to quaternary structure, homohexamer.

The catalysed reaction is L-glutamate + NADP(+) + H2O = 2-oxoglutarate + NH4(+) + NADPH + H(+). In terms of biological role, catalyzes the reversible oxidative deamination of glutamate to alpha-ketoglutarate and ammonia. This chain is NADP-specific glutamate dehydrogenase (gdhA), found in Synechocystis sp. (strain ATCC 27184 / PCC 6803 / Kazusa).